A 687-amino-acid polypeptide reads, in one-letter code: Chloride channel protein ClC-Kb (687 aa).

At 1 to 50 the chain is on the cytoplasmic side; sequence MEEFVGLREGSSGNPVTLQELWGPCPRIRRGIRGGLEWLKQKLFRLGEDW. 2 consecutive transmembrane segments (helical) span residues 51 to 82 and 91 to 111; these read YFLMTLGVLMALVSCAMDLAVESVVRAHQWLY and LRYLSWTVYPVALVSFSSGFS. An intramembrane region (helical) is located at residues 116–127; it reads PSSGGSGIPEVK. Ser-121 lines the chloride pocket. The next 2 helical transmembrane spans lie at 141–160 and 161–180; these read IKNFGAKVVGLSCTLACGST and LFLGKVGPFVHLSVMMAAYL. The N-linked (GlcNAc...) asparagine glycan is linked to Asn-193. Positions 203–224 form an intramembrane region, helical; it reads AAAAVGVATVFAAPFSGVLFSI. The helical transmembrane segment at 236-255 threads the bilayer; that stretch reads YWRGFFAATCGAFMFRLLAV. Positions 259, 261, 278, and 281 each coordinate Ca(2+). The next 2 helical transmembrane spans lie at 282–310 and 325–342; these read IFFFVALGGLCGILGSAYLFCQRIFFGFI and PVYSALATLVLASITYPP. An intramembrane region (helical) is located at residues 349–360; sequence ASRLSMKQHLDS. The next 2 helical transmembrane spans lie at 400 to 420 and 421 to 440; these read GTLAFFLVMKFWMLILATTIP and MPAGYFMPIFVYGAAIGRLF. Phe-426 contributes to the chloride binding site. The helical intramembrane region spans 464–496; sequence GGYALAGAAAFSGAVTHTISTALLAFEVTGQIV. A helical transmembrane segment spans residues 500 to 520; sequence PVLMAVLAANAIAQSCQPSFY. The Cytoplasmic portion of the chain corresponds to 521 to 687; the sequence is DGTVIVKKLP…SNLTNPPAPK (167 aa). 2 consecutive CBS domains span residues 551-609 and 626-684; these read MNHS…EPPS and CPTE…TNPP.

The protein belongs to the chloride channel (TC 2.A.49) family. CLCNKB subfamily. As to quaternary structure, homodimer. Interacts with BSND. N-glycosylated.

The protein localises to the basolateral cell membrane. It catalyses the reaction chloride(in) = chloride(out). The catalysed reaction is iodide(out) = iodide(in). The enzyme catalyses nitrate(in) = nitrate(out). It carries out the reaction bromide(in) = bromide(out). Activated by extracellular Ca(2+) and inhibited by extracellular acidic pH. Anion-selective channel permeable to small monovalent anions with ion selectivity for chloride &gt; bromide &gt; nitrate &gt; iodide. Forms a homodimeric channel where each subunit has its own ion conduction pathway. May conduct double-barreled currents controlled by two types of gates, two fast gates that control each subunit independently and a slow common gate that opens and shuts off both subunits simultaneously. Assembles with the regulatory subunit BSND/Barttin for sorting at the basolateral plasma membrane domain and functional switch to the ion conducting state. CLCNKB:BSND channels display mostly a linear current-voltage relationship controlled by common gate. Mediates chloride conductance along nephron segments, namely the thick ascending limb of Henle's loop, convoluted tubule and the collecting duct, contributing to the maintenance of systemic acid-base and electrolyte homeostasis. Conducts chloride currents in the stria vascularis of the inner ear to establish the endocochlear potential necessary for normal hearing. The chain is Chloride channel protein ClC-Kb from Homo sapiens (Human).